The chain runs to 189 residues: dCTP deaminase, dUMP-forming (189 aa).

DCTP contacts are provided by residues Lys-101–Arg-106, Asp-119, Thr-127–Glu-129, Gln-148, Tyr-162, and Gln-174. Glu-129 (proton donor/acceptor) is an active-site residue.

The protein belongs to the dCTP deaminase family. Homotrimer.

The enzyme catalyses dCTP + 2 H2O = dUMP + NH4(+) + diphosphate. It functions in the pathway pyrimidine metabolism; dUMP biosynthesis; dUMP from dCTP: step 1/1. Its function is as follows. Bifunctional enzyme that catalyzes both the deamination of dCTP to dUTP and the hydrolysis of dUTP to dUMP without releasing the toxic dUTP intermediate. The chain is dCTP deaminase, dUMP-forming from Rhodococcus jostii (strain RHA1).